Consider the following 639-residue polypeptide: Carbon monoxide dehydrogenase (639 aa).

Residues cysteine 41, cysteine 49, cysteine 50, cysteine 53, cysteine 58, and cysteine 72 each coordinate [4Fe-4S] cluster. Residues histidine 265, cysteine 300, cysteine 338, cysteine 451, cysteine 481, and cysteine 531 each contribute to the [Ni-4Fe-4S] cluster site.

This sequence belongs to the Ni-containing carbon monoxide dehydrogenase family. In terms of assembly, homodimer. The cofactor is [4Fe-4S] cluster. Requires [Ni-4Fe-4S] cluster as cofactor.

It is found in the cytoplasm. Its subcellular location is the cell inner membrane. The enzyme catalyses CO + 2 oxidized [2Fe-2S]-[ferredoxin] + H2O = 2 reduced [2Fe-2S]-[ferredoxin] + CO2 + 2 H(+). Allows growth in a CO-dependent manner in the dark. CODH oxidizes carbon monoxide coupled, via CooF, to the reduction of a hydrogen cation by a hydrogenase (possibly CooH). This Rhodospirillum rubrum protein is Carbon monoxide dehydrogenase (cooS).